The following is a 247-amino-acid chain: ATP synthase subunit a, chloroplastic (247 aa).

The next 5 helical transmembrane spans lie at 38–58 (QVLI…SIAV), 95–115 (VPFI…GALL), 134–154 (INTT…AGLT), 199–219 (LVVV…VMFL), and 220–240 (GLFT…AYIG).

This sequence belongs to the ATPase A chain family. As to quaternary structure, F-type ATPases have 2 components, CF(1) - the catalytic core - and CF(0) - the membrane proton channel. CF(1) has five subunits: alpha(3), beta(3), gamma(1), delta(1), epsilon(1). CF(0) has four main subunits: a, b, b' and c.

It localises to the plastid. It is found in the chloroplast thylakoid membrane. Its function is as follows. Key component of the proton channel; it plays a direct role in the translocation of protons across the membrane. In Eucalyptus globulus subsp. globulus (Tasmanian blue gum), this protein is ATP synthase subunit a, chloroplastic.